We begin with the raw amino-acid sequence, 194 residues long: Probable GTP-binding protein EngB (194 aa).

The 173-residue stretch at 22 to 194 folds into the EngB-type G domain; that stretch reads GKPEIALVGR…EVWHWIEQHI (173 aa). Residues 30-37, 57-61, 75-78, 142-145, and 175-177 contribute to the GTP site; these read GRSNVGKS, GKTQT, DVPG, TKSD, and FSS. Ser37 and Thr59 together coordinate Mg(2+).

The protein belongs to the TRAFAC class TrmE-Era-EngA-EngB-Septin-like GTPase superfamily. EngB GTPase family. Mg(2+) is required as a cofactor.

Its function is as follows. Necessary for normal cell division and for the maintenance of normal septation. The sequence is that of Probable GTP-binding protein EngB from Leuconostoc mesenteroides subsp. mesenteroides (strain ATCC 8293 / DSM 20343 / BCRC 11652 / CCM 1803 / JCM 6124 / NCDO 523 / NBRC 100496 / NCIMB 8023 / NCTC 12954 / NRRL B-1118 / 37Y).